Consider the following 422-residue polypeptide: MMEKFRVIGSDKPLSGEVTISGAKNAALPILFASILAEEPVEVSNVPHLRDIDTTMELLKRLGAKVSRNGSVHVDGREINEFCAPYDLVKTMRASIWALGPLVARFGEGQVSLPGGCAIGARPVDLHIHGLEQLGATIVLEDGYVKASVDGRLKGAHIVMDKVSVGATITIMCAATLAEGTTVLDNSAREPEIVDTADFLNKLGAKISGAGTDTITIEGVERLGGGQHSVVADRIETGTFLVAAAVSGGKVVCRNTNAHLLEAALAKLEEAGAKVETGEGWISLDMTDRELKAVKIVTAPHPGFPTDMQAQFTLLNMMAKGSGVITETIFENRFMHIPELQRMGAKAEIEGNTAICGETEKLSGAQVMATDLRASASLVIAGCIAQGETIVDRIYHIDRGYDKIEDKLSALGANITRFSESN.

24-25 provides a ligand contact to phosphoenolpyruvate; sequence KN. Residue Arg93 participates in UDP-N-acetyl-alpha-D-glucosamine binding. Cys117 acts as the Proton donor in catalysis. Position 117 is a 2-(S-cysteinyl)pyruvic acid O-phosphothioketal (Cys117). UDP-N-acetyl-alpha-D-glucosamine contacts are provided by residues 122-126, 162-165, Asp307, and Ile329; these read RPVDL and KVSV.

It belongs to the EPSP synthase family. MurA subfamily.

It localises to the cytoplasm. The catalysed reaction is phosphoenolpyruvate + UDP-N-acetyl-alpha-D-glucosamine = UDP-N-acetyl-3-O-(1-carboxyvinyl)-alpha-D-glucosamine + phosphate. It functions in the pathway cell wall biogenesis; peptidoglycan biosynthesis. In terms of biological role, cell wall formation. Adds enolpyruvyl to UDP-N-acetylglucosamine. The chain is UDP-N-acetylglucosamine 1-carboxyvinyltransferase from Vibrio atlanticus (strain LGP32) (Vibrio splendidus (strain Mel32)).